The chain runs to 336 residues: UPF0284 protein Pcal_1534 (336 aa).

Belongs to the UPF0284 family.

The chain is UPF0284 protein Pcal_1534 from Pyrobaculum calidifontis (strain DSM 21063 / JCM 11548 / VA1).